Here is a 360-residue protein sequence, read N- to C-terminus: F-box protein SKP2B (360 aa).

Residues 25–76 form the F-box domain; it reads ISEWKDIPVELLMKILNLVDDRTVIIASCICSGWRDAVSLGLTRLSLSWCKK. LRR repeat units follow at residues 77–99, 101–126, 127–152, 153–178, 180–205, 206–231, 232–257, 258–301, and 302–333; these read NMNSLVLSLAPKFVKLQTLVLRQ, KPQLEDNAVEAIANHCHELQDLDLSK, SSKITDHSLYSLARGCTNLTKLNLSG, CTSFSDTALAHLTRFCRKLKILNLCG, VEAVSDNTLQAIGENCNQLQSLNLGW, CENISDDGVMSLAYGCPDLRTLDLCS, CVLITDESVVALANRCIHLRSLGLYY, CRNI…NISQ, and CTYLTPSAVQAVCDTFPALHTCSGRHSLVMSG.

In terms of biological role, component of SCF(SKP2B) E3 ubiquitin ligase complexes, which mediate the ubiquitination and subsequent proteasomal degradation of the cyclin-dependent kinase inhibitor KRP1. Does not interact with auxin. This chain is F-box protein SKP2B (SKP2B), found in Arabidopsis thaliana (Mouse-ear cress).